The following is a 582-amino-acid chain: Protein alan shepard (582 aa).

Residues 1-12 (MHPRYSPAPPPQ) show a composition bias toward pro residues. The tract at residues 1–73 (MHPRYSPAPP…AAPPTSRSAF (73 aa)) is disordered. Tyrosine 5 carries the phosphotyrosine modification. The segment covering 13-24 (QQQQMGGPPHQQ) has biased composition (low complexity). Gly residues predominate over residues 25 to 35 (QGGGGGGGGSM). Residues 37-57 (GPSNAQQLPPQIPRSQNYSNG) show a composition bias toward polar residues. Low complexity predominate over residues 58–72 (SSSSAAAAPPTSRSA). Phosphotyrosine is present on residues tyrosine 125 and tyrosine 142. Residues 164–225 (PATTTYGQRV…TVQNQNQQGG (62 aa)) form a disordered region. Positions 178-225 (SPSNTNSSSSSNTGSQSGTLSTSLSNTTNTNTNMGPNGTVQNQNQQGG) are enriched in low complexity. 2 RRM domains span residues 231–304 (TNLY…MAKQ) and 310–389 (TNLY…FADG). The segment at 555–582 (PMTDSEQASTAASPDEAYTQYPHQAAPK) is disordered.

Has a role in the perception of gravity. This chain is Protein alan shepard, found in Drosophila erecta (Fruit fly).